The primary structure comprises 372 residues: tRNA-specific 2-thiouridylase MnmA (372 aa).

Residues 16–23 (GMSGGVDS) and methionine 42 each bind ATP. The interval 102-104 (NPD) is interaction with target base in tRNA. Residue cysteine 107 is the Nucleophile of the active site. Cysteine 107 and cysteine 205 are joined by a disulfide. Glycine 132 contributes to the ATP binding site. An interaction with tRNA region spans residues 155 to 157 (KDQ). Cysteine 205 (cysteine persulfide intermediate) is an active-site residue. The interaction with tRNA stretch occupies residues 317–318 (RY).

The protein belongs to the MnmA/TRMU family.

The protein localises to the cytoplasm. It carries out the reaction S-sulfanyl-L-cysteinyl-[protein] + uridine(34) in tRNA + AH2 + ATP = 2-thiouridine(34) in tRNA + L-cysteinyl-[protein] + A + AMP + diphosphate + H(+). Functionally, catalyzes the 2-thiolation of uridine at the wobble position (U34) of tRNA, leading to the formation of s(2)U34. This is tRNA-specific 2-thiouridylase MnmA from Shewanella baltica (strain OS185).